The primary structure comprises 321 residues: Sporulation protein cse15 (321 aa).

Coiled coils occupy residues 37 to 70 and 108 to 205; these read FHQKNNKLLKENTDMKEKLQQLSAELTHMSTKEK and IEEK…KEKL. Basic and acidic residues-rich tracts occupy residues 234–243 and 282–293; these read GTKQKEKTEE and AKSHTIEELKNR. 2 disordered regions span residues 234-253 and 274-293; these read GTKQKEKTEEEAPAAYAQPN and AHAQSSDQAKSHTIEELKNR.

The protein is Sporulation protein cse15 (cse15) of Bacillus subtilis (strain 168).